The chain runs to 308 residues: Ribonuclease HIII (308 aa).

In terms of domain architecture, RNase H type-2 spans 91–308 (KNVIGSDEVG…TEKALKMVKK (218 aa)). 3 residues coordinate a divalent metal cation: D97, E98, and D202.

It belongs to the RNase HII family. RnhC subfamily. Mn(2+) serves as cofactor. The cofactor is Mg(2+).

The protein localises to the cytoplasm. It catalyses the reaction Endonucleolytic cleavage to 5'-phosphomonoester.. In terms of biological role, endonuclease that specifically degrades the RNA of RNA-DNA hybrids. The chain is Ribonuclease HIII from Listeria monocytogenes serotype 4b (strain CLIP80459).